A 119-amino-acid chain; its full sequence is Large ribosomal subunit protein bL20 (119 aa).

The protein belongs to the bacterial ribosomal protein bL20 family.

Binds directly to 23S ribosomal RNA and is necessary for the in vitro assembly process of the 50S ribosomal subunit. It is not involved in the protein synthesizing functions of that subunit. The protein is Large ribosomal subunit protein bL20 of Bordetella petrii (strain ATCC BAA-461 / DSM 12804 / CCUG 43448).